The primary structure comprises 932 residues: Protocadherin gamma-A6 (932 aa).

The N-terminal stretch at methionine 1–alanine 29 is a signal peptide. Cadherin domains are found at residues glutamine 30–phenylalanine 133, leucine 134–phenylalanine 242, threonine 243–valine 347, valine 348–phenylalanine 452, proline 453–isoleucine 562, and aspartate 570–alanine 682. Topologically, residues glutamine 30–tyrosine 692 are extracellular. An N-linked (GlcNAc...) asparagine glycan is attached at asparagine 81. 2 N-linked (GlcNAc...) asparagine glycosylation sites follow: asparagine 419 and asparagine 545. Asparagine 685 carries N-linked (GlcNAc...) asparagine glycosylation. Residues leucine 693–alanine 713 traverse the membrane as a helical segment. Residues leucine 714–lysine 932 lie on the Cytoplasmic side of the membrane. Disordered stretches follow at residues aspartate 803–asparagine 841 and alanine 902–lysine 932. Positions glutamine 806 to asparagine 841 are enriched in polar residues. Positions asparagine 922–lysine 932 are enriched in basic residues.

The protein localises to the cell membrane. Functionally, potential calcium-dependent cell-adhesion protein. May be involved in the establishment and maintenance of specific neuronal connections in the brain. This is Protocadherin gamma-A6 (PCDHGA6) from Pan troglodytes (Chimpanzee).